The sequence spans 67 residues: Conotoxin Cp1.1 (67 aa).

Positions 1–26 (MMFRLTSVSCFLLVIACLNLFQVVLT) are cleaved as a signal peptide. 4 disulfides stabilise this stretch: C29–C43, C36–C48, C42–C52, and C47–C56. At Y60 the chain carries Tyrosine amide. The propeptide occupies 64–67 (ATFQ).

It belongs to the conotoxin I2 superfamily. Expressed by the venom duct.

The protein localises to the secreted. In Conus capitaneus (Captain cone), this protein is Conotoxin Cp1.1.